Here is a 204-residue protein sequence, read N- to C-terminus: Synaptosomal-associated protein 25-A (204 aa).

Over residues 1–11 the composition is skewed to basic and acidic residues; that stretch reads MAEDSDMRNEL. A disordered region spans residues 1–25; it reads MAEDSDMRNELADMQQRADQLADES. T-SNARE coiled-coil homology domains are found at residues 19 to 81 and 138 to 200; these read DQLA…LNDL and DARE…ATKM.

The protein belongs to the SNAP-25 family. As to expression, expressed in several regions throughout the adult brain, including the mesencephalon.

The protein localises to the synapse. Its subcellular location is the synaptosome. The protein resides in the cell membrane. Functionally, may play an important role in the synaptic function of specific neuronal systems. Associates with proteins involved in vesicle docking and membrane fusion. In Danio rerio (Zebrafish), this protein is Synaptosomal-associated protein 25-A.